The sequence spans 160 residues: Keratin-associated protein 9-6 (160 aa).

16 tandem repeats follow at residues Cys4–Gly8, Cys13–Thr17, Cys18–Thr22, Cys37–Ser41, Cys42–Ser46, Cys47–Tyr51, Cys56–Thr60, Cys61–Thr65, Cys66–Thr70, Cys75–Ser79, Cys80–Pro84, Cys90–Ser94, Cys95–Thr99, Cys140–Cys144, Cys149–Ser153, and Cys154–Ser158. The segment at Cys4 to Ser158 is 16 X 5 AA repeats of C-C-[GSVRQ]-[QTSPHN]-[TPSGYC].

Belongs to the KRTAP type 9 family. Interacts with hair keratins.

Its function is as follows. In the hair cortex, hair keratin intermediate filaments are embedded in an interfilamentous matrix, consisting of hair keratin-associated proteins (KRTAP), which are essential for the formation of a rigid and resistant hair shaft through their extensive disulfide bond cross-linking with abundant cysteine residues of hair keratins. The matrix proteins include the high-sulfur and high-glycine-tyrosine keratins. This chain is Keratin-associated protein 9-6, found in Homo sapiens (Human).